A 96-amino-acid chain; its full sequence is Mitochondrial import inner membrane translocase subunit Tim13-B (96 aa).

Residues 47-70 (CFRKCIGKPGGSLDNSEQKCVAMC) carry the Twin CX3C motif motif. 2 disulfides stabilise this stretch: C47-C70 and C51-C66.

This sequence belongs to the small Tim family. Heterohexamer; composed of 3 copies of TIMM8 (TIMM8A or TIMM8B) and 3 copies of TIMM13, named soluble 70 kDa complex. Associates with the TIM22 complex, whose core is composed of TIMM22.

The protein localises to the mitochondrion inner membrane. Its function is as follows. Mitochondrial intermembrane chaperone that participates in the import and insertion of some multi-pass transmembrane proteins into the mitochondrial inner membrane. Also required for the transfer of beta-barrel precursors from the TOM complex to the sorting and assembly machinery (SAM complex) of the outer membrane. Acts as a chaperone-like protein that protects the hydrophobic precursors from aggregation and guide them through the mitochondrial intermembrane space. The TIMM8-TIMM13 complex mediates the import of some proteins while the predominant TIMM9-TIMM10 70 kDa complex mediates the import of much more proteins. In Xenopus laevis (African clawed frog), this protein is Mitochondrial import inner membrane translocase subunit Tim13-B (timm13-b).